A 1892-amino-acid polypeptide reads, in one-letter code: Kinesin-like protein KIN-12E (1892 aa).

The disordered stretch occupies residues 1 to 28; that stretch reads MAGHGAGGRRASTSRAAARRVEAETNEN. One can recognise a Kinesin motor domain in the interval 64 to 401; it reads NVQVLIRIRP…LKFAQRAKLI (338 aa). An ATP-binding site is contributed by 145-152; it reads GQTGSGKT. 5 coiled-coil regions span residues 406-438, 486-526, 1066-1139, 1303-1357, and 1396-1528; these read KVNE…QQNM, SLRR…TTVK, LFSN…LHEQ, KLLQ…LAEN, and ISET…SYQI. Residues 1633–1649 are compositionally biased toward basic and acidic residues; that stretch reads LHESNSDTGHTKFEKPS. The segment at 1633–1656 is disordered; the sequence is LHESNSDTGHTKFEKPSGRTRGSG. Residues 1780-1841 are a coiled coil; that stretch reads MDQRKADLLE…LVGSNQAIAE (62 aa). A disordered region spans residues 1870–1892; that stretch reads HARHEHSRLQAAKSSRTRRGSHQ.

Belongs to the TRAFAC class myosin-kinesin ATPase superfamily. Kinesin family. KIN-12 subfamily.

This chain is Kinesin-like protein KIN-12E, found in Oryza sativa subsp. japonica (Rice).